A 1437-amino-acid polypeptide reads, in one-letter code: IQ domain-containing protein N (1437 aa).

The IQ 1 domain maps to 84–112; that stretch reads SRAATVIQASWKGYRLRQKLISQMTAAKA. Disordered stretches follow at residues 332–353, 416–440, and 848–878; these read TSPTSPVIRLPAPVGPNSSLSN, SQAQTYTVSTSSKTSPSSPTVKPSP, and STGSRAKPDDRSVAQPQLHSHAPNKTMQNPR. A compositionally biased stretch (low complexity) spans 422-440; sequence TVSTSSKTSPSSPTVKPSP. The segment covering 861–878 has biased composition (polar residues); the sequence is AQPQLHSHAPNKTMQNPR. IQ domains follow at residues 1190–1216, 1217–1239, 1240–1258, 1361–1389, and 1390–1413; these read QAVVTIQACARGYLVRRTVKVWHQWAT, IIQATWRGYRVRRNLERLFRATT, IIQAAWRGYCIRRARARQV, QHRACTIIQAAWKGYRTRRQLSQKQSAAK, and MVQAVWRGHYTRSCLTTDALLGTG.

As to quaternary structure, interacts with calmodulin. In terms of tissue distribution, expressed in testis, in elongating spermatids (at protein level).

Its function is as follows. Essential for spermiogenesis and fertilization. May be required for manchette assembly in elongating spermatids. This is IQ domain-containing protein N (Iqcn) from Mus musculus (Mouse).